The chain runs to 173 residues: NADH-ubiquinone oxidoreductase chain 6 (173 aa).

5 consecutive transmembrane segments (helical) span residues Met1–Ser21, Phe27–Gly47, Leu53–Leu73, Ser86–Trp106, and Tyr139–Leu159.

This sequence belongs to the complex I subunit 6 family.

The protein localises to the mitochondrion membrane. It carries out the reaction a ubiquinone + NADH + 5 H(+)(in) = a ubiquinol + NAD(+) + 4 H(+)(out). Core subunit of the mitochondrial membrane respiratory chain NADH dehydrogenase (Complex I) that is believed to belong to the minimal assembly required for catalysis. Complex I functions in the transfer of electrons from NADH to the respiratory chain. The immediate electron acceptor for the enzyme is believed to be ubiquinone. The sequence is that of NADH-ubiquinone oxidoreductase chain 6 (MT-ND6) from Salmo salar (Atlantic salmon).